We begin with the raw amino-acid sequence, 205 residues long: SREBP regulating gene protein (205 aa).

At 1–16 (MALYVSMVWRKILRKR) the chain is on the cytoplasmic side. Residues 17–35 (WVLGVVFGLSLIYFLTSTF) form a helical membrane-spanning segment. At 36–205 (KQEERTVRDR…GESPPELLPI (170 aa)) the chain is on the lumenal side. Residue Asn-67 is glycosylated (N-linked (GlcNAc...) asparagine).

Belongs to the SPRING family.

The protein resides in the golgi apparatus membrane. Functionally, positively regulates hepatic SREBP signaling pathway by modulating the proper localization of SCAP (SREBP cleavage-activating protein) to the endoplasmic reticulum, thereby controlling the level of functional SCAP. This chain is SREBP regulating gene protein, found in Xenopus laevis (African clawed frog).